Consider the following 225-residue polypeptide: Suppressor of cytokine signaling 3 (225 aa).

The interval 22–33 is kinase inhibitory region (KIR); that stretch reads LKTFSSKSEYQL. Positions 34–45 are extended SH2 subdomain (ESS); sequence VVNAVRKLQESG. Positions 46–142 constitute an SH2 domain; sequence FYWSAVTGGE…TPSFSLPPTE (97 aa). Residues 131-160 form a disordered region; the sequence is PGTPSFSLPPTEPSSEVPEQPPAQALPGST. Positions 177-224 constitute an SOCS box domain; that stretch reads VLSRPLSSNVATLQHLCRKTVNGHLDSYEKVTQLPGPIREFLDQYDAP.

Interacts with multiple activated proteins of the tyrosine kinase signaling pathway including IGF1 receptor, insulin receptor and JAK2. Binding to JAK2 is mediated through the KIR and SH2 domains to a phosphorylated tyrosine residue within the JAK2 JH1 domain. Binds specific activated tyrosine residues of the leptin, EPO, IL12, GSCF and gp130 receptors. Interaction with CSNK1E stabilizes SOCS3 protein. Component of the probable ECS(SOCS3) E3 ubiquitin-protein ligase complex which contains CUL5, RNF7/RBX2, elongin BC complex and SOCS3. Interacts with CUL5, RNF7, ELOB and ELOC. Interacts with FGFR3. Interacts with INSR. Interacts with BCL10; this interaction may interfere with BCL10-binding with PELI2. Interacts with NOD2 (via CARD domain); the interaction promotes NOD2 degradation. Phosphorylated on tyrosine residues after stimulation by the cytokines, IL-2, EPO or IGF1. As to expression, low expression in lung, spleen and thymus. Expressed in Th2 but not TH1 cells.

It functions in the pathway protein modification; protein ubiquitination. SOCS family proteins form part of a classical negative feedback system that regulates cytokine signal transduction. SOCS3 is involved in negative regulation of cytokines that signal through the JAK/STAT pathway. Inhibits cytokine signal transduction by binding to tyrosine kinase receptors including IL6ST/gp130, LIF, erythropoietin, insulin, IL12, GCSF and leptin receptors. Binding to JAK2 inhibits its kinase activity and regulates IL6 signaling. Suppresses fetal liver erythropoiesis. Regulates onset and maintenance of allergic responses mediated by T-helper type 2 cells. Probable substrate recognition component of a SCF-like ECS (Elongin BC-CUL2/5-SOCS-box protein) E3 ubiquitin-protein ligase complex which mediates the ubiquitination and subsequent proteasomal degradation of target proteins. The protein is Suppressor of cytokine signaling 3 of Mus musculus (Mouse).